Consider the following 361-residue polypeptide: Phosphoserine aminotransferase (361 aa).

Arg43 is a binding site for L-glutamate. Pyridoxal 5'-phosphate-binding positions include 77-78 (AS), Trp103, Thr152, Asp172, and Gln195. The residue at position 196 (Lys196) is an N6-(pyridoxal phosphate)lysine. Residue 237-238 (NT) coordinates pyridoxal 5'-phosphate.

The protein belongs to the class-V pyridoxal-phosphate-dependent aminotransferase family. SerC subfamily. In terms of assembly, homodimer. Pyridoxal 5'-phosphate is required as a cofactor.

The protein localises to the cytoplasm. The enzyme catalyses O-phospho-L-serine + 2-oxoglutarate = 3-phosphooxypyruvate + L-glutamate. The catalysed reaction is 4-(phosphooxy)-L-threonine + 2-oxoglutarate = (R)-3-hydroxy-2-oxo-4-phosphooxybutanoate + L-glutamate. Its pathway is amino-acid biosynthesis; L-serine biosynthesis; L-serine from 3-phospho-D-glycerate: step 2/3. It functions in the pathway cofactor biosynthesis; pyridoxine 5'-phosphate biosynthesis; pyridoxine 5'-phosphate from D-erythrose 4-phosphate: step 3/5. Functionally, catalyzes the reversible conversion of 3-phosphohydroxypyruvate to phosphoserine and of 3-hydroxy-2-oxo-4-phosphonooxybutanoate to phosphohydroxythreonine. The chain is Phosphoserine aminotransferase from Desulfosudis oleivorans (strain DSM 6200 / JCM 39069 / Hxd3) (Desulfococcus oleovorans).